Consider the following 311-residue polypeptide: ADP-ribosyl cyclase/cyclic ADP-ribose hydrolase 2 (311 aa).

An N-terminal signal peptide occupies residues 1 to 24 (MAVQGGLLSLWLWLWLSLLTVLLG). 3 disulfide bridges follow: cysteine 46–cysteine 60, cysteine 76–cysteine 156, and cysteine 137–cysteine 150. N-linked (GlcNAc...) asparagine glycosylation is found at asparagine 59 and asparagine 88. An NAD(+)-binding site is contributed by tryptophan 102. Tryptophan 102 contributes to the nicotinamide binding site. N-linked (GlcNAc...) asparagine glycosylation is present at asparagine 141. Tryptophan 165 is a binding site for NAD(+). Asparagine 185 carries an N-linked (GlcNAc...) asparagine glycan. Glutamate 203 is a binding site for NAD(+). 2 cysteine pairs are disulfide-bonded: cysteine 231–cysteine 252 and cysteine 264–cysteine 273. Serine 286 carries the GPI-anchor amidated serine lipid modification. Residues 287-311 (ASLHAIGDASLLISLLVALASSSQA) constitute a propeptide that is removed on maturation.

The protein belongs to the ADP-ribosyl cyclase family. As to quaternary structure, homodimer. Expressed in the bone marrow, spleen and thymus in lymphoid organs, and the lung, kidney and heart in non-lymphoid organs.

Its subcellular location is the cell membrane. It catalyses the reaction NAD(+) + H2O = ADP-D-ribose + nicotinamide + H(+). It carries out the reaction NAD(+) = cyclic ADP-beta-D-ribose + nicotinamide + H(+). The enzyme catalyses cyclic ADP-beta-D-ribose + H2O = ADP-D-ribose. Functionally, catalyzes both the synthesis of cyclic ADP-beta-D-ribose (cADPR) from NAD(+), and its hydrolysis to ADP-D-ribose (ADPR). Cyclic ADPR is known to serve as an endogenous second messenger that elicits calcium release from intracellular stores, and thus regulates the mobilization of intracellular calcium. May be involved in pre-B-cell growth. The sequence is that of ADP-ribosyl cyclase/cyclic ADP-ribose hydrolase 2 (Bst1) from Mus musculus (Mouse).